Reading from the N-terminus, the 125-residue chain is Large ribosomal subunit protein bL12 (125 aa).

Belongs to the bacterial ribosomal protein bL12 family. Homodimer. Part of the ribosomal stalk of the 50S ribosomal subunit. Forms a multimeric L10(L12)X complex, where L10 forms an elongated spine to which 2 to 4 L12 dimers bind in a sequential fashion. Binds GTP-bound translation factors.

Forms part of the ribosomal stalk which helps the ribosome interact with GTP-bound translation factors. Is thus essential for accurate translation. In Gluconobacter oxydans (strain 621H) (Gluconobacter suboxydans), this protein is Large ribosomal subunit protein bL12.